The sequence spans 711 residues: Ribosomal RNA large subunit methyltransferase K/L (711 aa).

The region spanning 43-154 (TLYRTLLWSR…RENLVISLDL (112 aa)) is the THUMP domain.

This sequence belongs to the methyltransferase superfamily. RlmKL family.

The protein localises to the cytoplasm. The enzyme catalyses guanosine(2445) in 23S rRNA + S-adenosyl-L-methionine = N(2)-methylguanosine(2445) in 23S rRNA + S-adenosyl-L-homocysteine + H(+). The catalysed reaction is guanosine(2069) in 23S rRNA + S-adenosyl-L-methionine = N(2)-methylguanosine(2069) in 23S rRNA + S-adenosyl-L-homocysteine + H(+). Specifically methylates the guanine in position 2445 (m2G2445) and the guanine in position 2069 (m7G2069) of 23S rRNA. This Haemophilus influenzae (strain PittEE) protein is Ribosomal RNA large subunit methyltransferase K/L.